A 136-amino-acid chain; its full sequence is Histone H3.3 (136 aa).

The disordered stretch occupies residues 1-41 (MARTKQTARKSTGGKAPRKQLASKAARKSAPVTGGVKKPHR). Lys5 bears the N6,N6,N6-trimethyllysine; alternate mark. Lys5 is modified (N6,N6-dimethyllysine; alternate). N6-methyllysine; alternate occurs at positions 5 and 10. Lys10 carries the N6-acetyllysine; alternate modification. At Ser11 the chain carries Phosphoserine. An N6,N6-dimethyllysine; alternate modification is found at Lys15. Lys15, Lys19, Lys24, Lys28, and Lys37 each carry N6-acetyllysine; alternate. An N6-methyllysine; alternate mark is found at Lys19, Lys24, Lys28, and Lys37. N6,N6,N6-trimethyllysine; alternate occurs at positions 28 and 37. 2 positions are modified to N6,N6-dimethyllysine; alternate: Lys28 and Lys37. An N6-acetyllysine mark is found at Lys57 and Lys65. Lys80 is modified (N6,N6,N6-trimethyllysine; alternate). Lys80 is subject to N6,N6-dimethyllysine; alternate. N6-methyllysine; alternate is present on Lys80.

Belongs to the histone H3 family. The nucleosome is a histone octamer containing two molecules each of H2A, H2B, H3 and H4 assembled in one H3-H4 heterotetramer and two H2A-H2B heterodimers. The octamer wraps approximately 147 bp of DNA. In terms of processing, phosphorylated to form H3S10ph. H3S10ph promotes subsequent H3K14ac formation and is required for transcriptional activation through TBP recruitment to the promoters. Mono-, di- and trimethylated by the COMPASS complex to form H3K4me1/2/3. H3K4me activates gene expression by regulating transcription elongation and plays a role in telomere length maintenance. H3K4me enrichment correlates with transcription levels, and occurs in a 5' to 3' gradient with H3K4me3 enrichment at the 5'-end of genes, shifting to H3K4me2 and then H3K4me1. Methylated by SET2 to form H3K36me. H3K36me represses gene expression. Methylated by DOT1 to form H3K79me. H3K79me is required for association of SIR proteins with telomeric regions and for telomeric silencing. The COMPASS-mediated formation of H3K4me2/3 and the DOT1-mediated formation of H3K79me require H2BK123ub1. Post-translationally, acetylation of histone H3 leads to transcriptional activation. H3K14ac formation by GCN5 is promoted by H3S10ph. H3K14ac can also be formed by ESA1. H3K56ac formation occurs predominantly in newly synthesized H3 molecules during G1, S and G2/M of the cell cycle and may be involved in DNA repair.

The protein localises to the nucleus. It is found in the chromosome. In terms of biological role, core component of nucleosome. Nucleosomes wrap and compact DNA into chromatin, limiting DNA accessibility to the cellular machineries which require DNA as a template. Histones thereby play a central role in transcription regulation, DNA repair, DNA replication and chromosomal stability. DNA accessibility is regulated via a complex set of post-translational modifications of histones, also called histone code, and nucleosome remodeling. The sequence is that of Histone H3.3 (HHT3) from Meyerozyma guilliermondii (strain ATCC 6260 / CBS 566 / DSM 6381 / JCM 1539 / NBRC 10279 / NRRL Y-324) (Yeast).